A 549-amino-acid chain; its full sequence is MSESFAQLFEESLKVLETRQGSIVSGTVVAIQKGFVLVDAGLKSESAIPVAEFLNAQGELEIQVGDTVNVALDAVEDGFGETKLSREKAVRHESWIELEKAYEEKATVIGLIXGKVKGGFTVELNGVRAFLPGSLVDTRPAREADHLLGKELEFKVIKLDQKRNNVVVSRRAVIESENSQEREQVLENLVEGSEVKGVVKNLTEYGAFVDLGGVDGLLHITDMAWKRVKHPSEIVNVGDEVTVKVLKFDKDRTRVSLGLKQLGQDPWAAIAENHPVNSKLTGKVTNLTDYGCFVEILDGVEGLVHVSEMDWTNKNIHPSKVVSLGDTVEVMVLEIDEERRRISLGLKQCKANPWTQFADTHNKGDKVTGKIKSITDFGIFIGLEGGIDGLVHLSDISWSISGEEAVRQYKKGDEVSAVVLAVDAVKERISLGIKQLEEDPFNNFVAINKKGAVVSATVVEADAKGAKVELAGGVEGYIRSADLTSEVAVGDVVEAKYTGVDRKSRIVHLSVKAKDQAEEAAAVASVNNKQEDIVIPNAMAEAFKAAKGE.

S1 motif domains lie at 21-87 (GSIV…LSRE), 105-171 (KATV…VSRR), 192-260 (GSEV…LGLK), 277-347 (NSKL…LGLK), 364-434 (GDKV…LGIK), and 451-512 (GAVV…LSVK).

The protein belongs to the bacterial ribosomal protein bS1 family.

In terms of biological role, binds mRNA; thus facilitating recognition of the initiation point. It is needed to translate mRNA with a short Shine-Dalgarno (SD) purine-rich sequence. This is Small ribosomal subunit protein bS1 (rpsA) from Haemophilus influenzae (strain ATCC 51907 / DSM 11121 / KW20 / Rd).